The primary structure comprises 338 residues: Serpentine receptor class alpha-31 (338 aa).

Transmembrane regions (helical) follow at residues 23 to 43 (GNHCFILLIIISSVFLTVFAI), 59 to 79 (LLFSAIINGVVHHWSIAGIRI), 108 to 125 (LYYYTNLFSSLCCISLFF), 142 to 162 (FSKIFLLFQSISPFGILYWIF), 188 to 208 (VNEFRLYILGTFFVLSFVIFF), 240 to 260 (VCIIIATQITCLVTTASTTEI), and 276 to 296 (SIAFMTGLTYSNFFLPIIIIY).

This sequence belongs to the nematode receptor-like protein sra family.

The protein resides in the membrane. The polypeptide is Serpentine receptor class alpha-31 (sra-31) (Caenorhabditis elegans).